A 291-amino-acid polypeptide reads, in one-letter code: 3-hydroxy-5-phosphonooxypentane-2,4-dione thiolase (291 aa).

Lys-203 acts as the Schiff-base intermediate with substrate in catalysis.

This sequence belongs to the DeoC/FbaB aldolase family. Homodecamer.

The protein localises to the cytoplasm. The enzyme catalyses dihydroxyacetone phosphate + acetyl-CoA = 3-hydroxy-2,4-dioxopentyl phosphate + CoA. In terms of biological role, involved in the degradation of phospho-AI-2, thereby terminating induction of the lsr operon and closing the AI-2 signaling cycle. Catalyzes the transfer of an acetyl moiety from 3-hydroxy-5-phosphonooxypentane-2,4-dione to CoA to form glycerone phosphate and acetyl-CoA. The chain is 3-hydroxy-5-phosphonooxypentane-2,4-dione thiolase from Escherichia coli O139:H28 (strain E24377A / ETEC).